The chain runs to 411 residues: Intracellular hyaluronan-binding protein 4 (411 aa).

Residues Ser7 and Ser36 each carry the phosphoserine modification. The stretch at 42-62 (LREAEHRRQQQLQRKRRDEAA) forms a coiled coil. The tract at residues 42–271 (LREAEHRRQQ…ECQGTLDEES (230 aa)) is disordered. Arg70 bears the Omega-N-methylarginine mark. Ser74 is modified (phosphoserine). Over residues 87–97 (GRRESQKERKS) the composition is skewed to basic and acidic residues. Ser108 bears the Phosphoserine mark. 2 stretches are compositionally biased toward basic and acidic residues: residues 138-181 (VLER…DRPL) and 205-229 (DSFD…RMED). Glycyl lysine isopeptide (Lys-Gly) (interchain with G-Cter in SUMO1); alternate cross-links involve residues Lys212 and Lys274. Glycyl lysine isopeptide (Lys-Gly) (interchain with G-Cter in SUMO2); alternate cross-links involve residues Lys212 and Lys274. A coiled-coil region spans residues 279-301 (EVEEENQVQEMTLDEWKNLQEQT). Basic and acidic residues predominate over residues 296–313 (NLQEQTRPKPEFNIRKPE). A disordered region spans residues 296-318 (NLQEQTRPKPEFNIRKPESTVPS). Residue Lys334 forms a Glycyl lysine isopeptide (Lys-Gly) (interchain with G-Cter in SUMO1); alternate linkage. Residue Lys334 forms a Glycyl lysine isopeptide (Lys-Gly) (interchain with G-Cter in SUMO2); alternate linkage. Phosphothreonine; by PKC occurs at positions 352 and 373. Residues 358 to 411 (NFGNLPRPGRGARGSTRGGRGRMRRTENYGPRAEVVTQDVAPNPDDPEDFPALA) are disordered. Residues 402 to 411 (DDPEDFPALA) are compositionally biased toward acidic residues.

This sequence belongs to the SERBP1-HABP4 family. As to quaternary structure, associates with ribosomes; promoting ribosome stabilization. Interacts with EEF2/eEF2; promoting ribosome stabilization. Interacts with FMR1. Interacts with FXR1 and FXR2. Interacts with CHD3 (via C-terminus). Interacts (via C-terminus) with RACK1. Interacts with p53/TP53. Interacts (via N-terminus) with SRSF9; this interaction is direct. Interacts with SYNCRIP; this interaction is direct. Interacts with MEF2C (via N-terminus); this interaction decreases DNA-binding activity of MEF2C in myocardial cells in response to mechanical stress. Interacts with PRMT1 (via N-terminus). Interacts with SPIN1. In terms of processing, phosphorylated by phorbol 12-myristate 13-acetate (PMA)-activated PKC isoforms at Thr-352 and Thr-373. Post-translationally, methylated. Methylation is decreased by phorbol 12-myristate 13-acetate (PMA)-activated PKC, in vitro. Expressed in adult heart, brain, liver, kidney, testis, and in various embryonic tissues, but not in adult spleen, lung or skeletal muscle.

Its subcellular location is the nucleus. It is found in the cytoplasm. The protein localises to the stress granule. The protein resides in the sarcoplasm. It localises to the nuclear body. Its subcellular location is the nucleolus. It is found in the nucleus speckle. The protein localises to the cajal body. The protein resides in the gem. Functionally, ribosome-binding protein that promotes ribosome hibernation, a process during which ribosomes are stabilized in an inactive state and preserved from proteasomal degradation. Acts via its association with EEF2/eEF2 factor at the A-site of the ribosome, promoting ribosome stabilization in an inactive state compatible with storage. Plays a key role in ribosome hibernation in the mature oocyte by promoting ribosome stabilization. Ribosomes, which are produced in large quantities during oogenesis, are stored and translationally repressed in the oocyte and early embryo. Also binds RNA, regulating transcription and pre-mRNA splicing. Binds (via C-terminus) to poly(U) RNA. Seems to play a role in PML-nuclear bodies formation. Negatively regulates DNA-binding activity of the transcription factor MEF2C in myocardial cells in response to mechanical stress. The polypeptide is Intracellular hyaluronan-binding protein 4 (Mus musculus (Mouse)).